The sequence spans 314 residues: Fructose-1,6-bisphosphatase class 1 (314 aa).

Glutamate 91, aspartate 112, leucine 114, and aspartate 115 together coordinate Mg(2+). Residues 115 to 118, tyrosine 223, and lysine 254 contribute to the substrate site; that span reads DGSS. Position 260 (glutamate 260) interacts with Mg(2+).

It belongs to the FBPase class 1 family. As to quaternary structure, homotetramer. Mg(2+) serves as cofactor.

Its subcellular location is the cytoplasm. It carries out the reaction beta-D-fructose 1,6-bisphosphate + H2O = beta-D-fructose 6-phosphate + phosphate. Its pathway is carbohydrate biosynthesis; gluconeogenesis. In Geobacter metallireducens (strain ATCC 53774 / DSM 7210 / GS-15), this protein is Fructose-1,6-bisphosphatase class 1.